A 373-amino-acid polypeptide reads, in one-letter code: Queuine tRNA-ribosyltransferase (373 aa).

Asp91 (proton acceptor) is an active-site residue. Substrate-binding positions include 91–95, Asp145, and Gln187; that span reads DSGGF. The interval 245–251 is RNA binding; sequence GVGTPED. The active-site Nucleophile is Asp264. The interval 269–273 is RNA binding; important for wobble base 34 recognition; it reads TRNAR. Positions 302, 304, 307, and 333 each coordinate Zn(2+).

This sequence belongs to the queuine tRNA-ribosyltransferase family. As to quaternary structure, homodimer. Within each dimer, one monomer is responsible for RNA recognition and catalysis, while the other monomer binds to the replacement base PreQ1. Zn(2+) serves as cofactor.

It catalyses the reaction 7-aminomethyl-7-carbaguanine + guanosine(34) in tRNA = 7-aminomethyl-7-carbaguanosine(34) in tRNA + guanine. It participates in tRNA modification; tRNA-queuosine biosynthesis. In terms of biological role, catalyzes the base-exchange of a guanine (G) residue with the queuine precursor 7-aminomethyl-7-deazaguanine (PreQ1) at position 34 (anticodon wobble position) in tRNAs with GU(N) anticodons (tRNA-Asp, -Asn, -His and -Tyr). Catalysis occurs through a double-displacement mechanism. The nucleophile active site attacks the C1' of nucleotide 34 to detach the guanine base from the RNA, forming a covalent enzyme-RNA intermediate. The proton acceptor active site deprotonates the incoming PreQ1, allowing a nucleophilic attack on the C1' of the ribose to form the product. After dissociation, two additional enzymatic reactions on the tRNA convert PreQ1 to queuine (Q), resulting in the hypermodified nucleoside queuosine (7-(((4,5-cis-dihydroxy-2-cyclopenten-1-yl)amino)methyl)-7-deazaguanosine). The polypeptide is Queuine tRNA-ribosyltransferase (Syntrophobacter fumaroxidans (strain DSM 10017 / MPOB)).